Consider the following 340-residue polypeptide: Ketol-acid reductoisomerase (NADP(+)) (340 aa).

Residues 1-182 enclose the KARI N-terminal Rossmann domain; it reads MRVYYDRDCD…GGGRSGIIET (182 aa). Residues 24–27, arginine 48, serine 51, serine 53, and 83–86 each bind NADP(+); these read YGSQ and DELQ. The active site involves histidine 108. Glycine 134 contacts NADP(+). Residues 183–329 enclose the KARI C-terminal knotted domain; the sequence is NFREECETDL…KELRGMMPWI (147 aa). 4 residues coordinate Mg(2+): aspartate 191, glutamate 195, glutamate 227, and glutamate 231. Serine 252 provides a ligand contact to substrate.

This sequence belongs to the ketol-acid reductoisomerase family. Requires Mg(2+) as cofactor.

It catalyses the reaction (2R)-2,3-dihydroxy-3-methylbutanoate + NADP(+) = (2S)-2-acetolactate + NADPH + H(+). The catalysed reaction is (2R,3R)-2,3-dihydroxy-3-methylpentanoate + NADP(+) = (S)-2-ethyl-2-hydroxy-3-oxobutanoate + NADPH + H(+). The protein operates within amino-acid biosynthesis; L-isoleucine biosynthesis; L-isoleucine from 2-oxobutanoate: step 2/4. Its pathway is amino-acid biosynthesis; L-valine biosynthesis; L-valine from pyruvate: step 2/4. In terms of biological role, involved in the biosynthesis of branched-chain amino acids (BCAA). Catalyzes an alkyl-migration followed by a ketol-acid reduction of (S)-2-acetolactate (S2AL) to yield (R)-2,3-dihydroxy-isovalerate. In the isomerase reaction, S2AL is rearranged via a Mg-dependent methyl migration to produce 3-hydroxy-3-methyl-2-ketobutyrate (HMKB). In the reductase reaction, this 2-ketoacid undergoes a metal-dependent reduction by NADPH to yield (R)-2,3-dihydroxy-isovalerate. The protein is Ketol-acid reductoisomerase (NADP(+)) of Dinoroseobacter shibae (strain DSM 16493 / NCIMB 14021 / DFL 12).